The primary structure comprises 495 residues: DNA-directed RNA polymerase subunit alpha (495 aa).

Positions 1–301 are alpha N-terminal domain (alpha-NTD); sequence MPYIKHIETK…RMLASLQAPP (301 aa). 2 disordered regions span residues 159–227 and 391–495; these read SLVP…EAPH and QEQV…PEET. The segment at 170 to 237 is insert; that stretch reads PRDPLEPEND…IPSMRDDHMT (68 aa). Residues 172 to 186 are compositionally biased toward basic and acidic residues; that stretch reads DPLEPENDSKSETKS. 2 stretches are compositionally biased toward polar residues: residues 207-219 and 391-403; these read VNAQ…SNST and QEQV…SQIA. The tract at residues 317–495 is alpha C-terminal domain (alpha-CTD); sequence AKEIALTPIE…LSSSQNPEET (179 aa). The span at 417-426 shows a compositional bias: basic and acidic residues; the sequence is RPIDSKETRR. Basic residues predominate over residues 444-453; the sequence is RKSSKTKVKA. Polar residues-rich tracts occupy residues 464–473 and 486–495; these read KSANLQQAEE and LSSSQNPEET.

This sequence belongs to the RNA polymerase alpha chain family. As to quaternary structure, in plastids the minimal PEP RNA polymerase catalytic core is composed of four subunits: alpha, beta, beta', and beta''. When a (nuclear-encoded) sigma factor is associated with the core the holoenzyme is formed, which can initiate transcription.

Its subcellular location is the plastid. It is found in the chloroplast. The enzyme catalyses RNA(n) + a ribonucleoside 5'-triphosphate = RNA(n+1) + diphosphate. DNA-dependent RNA polymerase catalyzes the transcription of DNA into RNA using the four ribonucleoside triphosphates as substrates. This is DNA-directed RNA polymerase subunit alpha from Nephroselmis olivacea (Green alga).